A 462-amino-acid polypeptide reads, in one-letter code: Nuclear distribution protein PAC1 (462 aa).

Positions 9-41 constitute a LisH domain; that stretch reads QAEELHKAIIAYLGVINAPKTAAAFREEVNFSA. A coiled-coil region spans residues 60-87; it reads TSVVRLQKKVLELEQRNQSLQSELDSTT. Positions 78–99 are enriched in polar residues; it reads SLQSELDSTTPTSLLRRNQDPS. The segment at 78 to 103 is disordered; that stretch reads SLQSELDSTTPTSLLRRNQDPSSWLP. WD repeat units lie at residues 113–154, 156–196, 200–247, 250–289, 292–352, 354–393, 398–445, and 447–462; these read SHRS…RTVK, HTKG…KNIR, GHDH…CVKT, GHADWVRDVSPSFDGRWLLSAGNDQTARLWDASSGEAKCT, GHEH…IKTL, GHDNWVRALIFHPGGKYLLSASDDKTIRCWDLTQEGRCVK, AHSH…AGIR, and VIATGCVDLNVRIFAS. Residues 414–434 are disordered; that stretch reads KDAPTNGDAPNGTTANGASKK.

The protein belongs to the WD repeat LIS1/nudF family. As to quaternary structure, self-associates. Interacts with NDL1 and dynein.

It is found in the cytoplasm. The protein localises to the cytoskeleton. Its subcellular location is the spindle pole. Functionally, positively regulates the activity of the minus-end directed microtubule motor protein dynein. May enhance dynein-mediated microtubule sliding by targeting dynein to the microtubule plus end. Required for nuclear migration during vegetative growth as well as development. Required for retrograde early endosome (EE) transport from the hyphal tip. Required for localization of dynein to the mitotic spindle poles. Recruits additional proteins to the dynein complex at SPBs. This Phaeosphaeria nodorum (strain SN15 / ATCC MYA-4574 / FGSC 10173) (Glume blotch fungus) protein is Nuclear distribution protein PAC1.